A 205-amino-acid chain; its full sequence is Probable thymidylate kinase (205 aa).

Residue 10–17 (GIDGSGKT) participates in ATP binding.

Belongs to the thymidylate kinase family.

It catalyses the reaction dTMP + ATP = dTDP + ADP. This chain is Probable thymidylate kinase (tmk), found in Pyrococcus abyssi (strain GE5 / Orsay).